Here is a 231-residue protein sequence, read N- to C-terminus: MRIAVIGAMEEEVRILRDKLEQAETETVAGCEFTKGLLAGHEVILLKSGIGKVNAAMSTTILLEKYKPEKVINTGSAGGFHHSLNVGDVVISTEVRHHDVDVTAFNYEYGQVPGMPPGFKADEALVALAEKCMQTEENIQVVKGMIATGDSFMSDPNRVAAIRDKFENLYAVEMEAAAVAQVCHQYEVPFVIIRALSDIAGKESNVSFDQFLDQAALHSTNFIVKVLEELK.

Glu12 (proton acceptor) is an active-site residue. Residues Gly78, Met153, and 174 to 175 each bind substrate; that span reads ME. The active-site Proton donor is Asp198.

Belongs to the PNP/UDP phosphorylase family. MtnN subfamily.

The catalysed reaction is S-adenosyl-L-homocysteine + H2O = S-(5-deoxy-D-ribos-5-yl)-L-homocysteine + adenine. It carries out the reaction S-methyl-5'-thioadenosine + H2O = 5-(methylsulfanyl)-D-ribose + adenine. It catalyses the reaction 5'-deoxyadenosine + H2O = 5-deoxy-D-ribose + adenine. It participates in amino-acid biosynthesis; L-methionine biosynthesis via salvage pathway; S-methyl-5-thio-alpha-D-ribose 1-phosphate from S-methyl-5'-thioadenosine (hydrolase route): step 1/2. Its function is as follows. Catalyzes the irreversible cleavage of the glycosidic bond in both 5'-methylthioadenosine (MTA) and S-adenosylhomocysteine (SAH/AdoHcy) to adenine and the corresponding thioribose, 5'-methylthioribose and S-ribosylhomocysteine, respectively. Also cleaves 5'-deoxyadenosine, a toxic by-product of radical S-adenosylmethionine (SAM) enzymes, into 5-deoxyribose and adenine. This is 5'-methylthioadenosine/S-adenosylhomocysteine nucleosidase from Bacillus cereus (strain G9842).